Consider the following 356-residue polypeptide: UDP-N-acetylglucosamine--N-acetylmuramyl-(pentapeptide) pyrophosphoryl-undecaprenol N-acetylglucosamine transferase (356 aa).

UDP-N-acetyl-alpha-D-glucosamine-binding positions include 12 to 14, N124, R163, S188, I242, 261 to 266, and Q287; these read TGG and ALTVSE.

The protein belongs to the glycosyltransferase 28 family. MurG subfamily.

The protein localises to the cell inner membrane. The enzyme catalyses di-trans,octa-cis-undecaprenyl diphospho-N-acetyl-alpha-D-muramoyl-L-alanyl-D-glutamyl-meso-2,6-diaminopimeloyl-D-alanyl-D-alanine + UDP-N-acetyl-alpha-D-glucosamine = di-trans,octa-cis-undecaprenyl diphospho-[N-acetyl-alpha-D-glucosaminyl-(1-&gt;4)]-N-acetyl-alpha-D-muramoyl-L-alanyl-D-glutamyl-meso-2,6-diaminopimeloyl-D-alanyl-D-alanine + UDP + H(+). It participates in cell wall biogenesis; peptidoglycan biosynthesis. Its function is as follows. Cell wall formation. Catalyzes the transfer of a GlcNAc subunit on undecaprenyl-pyrophosphoryl-MurNAc-pentapeptide (lipid intermediate I) to form undecaprenyl-pyrophosphoryl-MurNAc-(pentapeptide)GlcNAc (lipid intermediate II). This chain is UDP-N-acetylglucosamine--N-acetylmuramyl-(pentapeptide) pyrophosphoryl-undecaprenol N-acetylglucosamine transferase, found in Azotobacter vinelandii (strain DJ / ATCC BAA-1303).